A 201-amino-acid polypeptide reads, in one-letter code: Recombination protein RecR (201 aa).

The C4-type zinc finger occupies 60–75 (CATCGNFDTVQPCAVC). The region spanning 83–178 (GIICVVEDVP…DVTRLAHGVP (96 aa)) is the Toprim domain.

Belongs to the RecR family.

Functionally, may play a role in DNA repair. It seems to be involved in an RecBC-independent recombinational process of DNA repair. It may act with RecF and RecO. The polypeptide is Recombination protein RecR (Hyphomonas neptunium (strain ATCC 15444)).